Consider the following 596-residue polypeptide: Arginine--tRNA ligase (596 aa).

Residues 123 to 133 (PNTNKPLHLGH) carry the 'HIGH' region motif.

It belongs to the class-I aminoacyl-tRNA synthetase family. Monomer.

Its subcellular location is the cytoplasm. It catalyses the reaction tRNA(Arg) + L-arginine + ATP = L-arginyl-tRNA(Arg) + AMP + diphosphate. This chain is Arginine--tRNA ligase, found in Amoebophilus asiaticus (strain 5a2).